The sequence spans 164 residues: Ubiquitin-fold modifier-conjugating enzyme 1 (164 aa).

Cys-116 functions as the Glycyl thioester intermediate in the catalytic mechanism.

This sequence belongs to the ubiquitin-conjugating enzyme family. UFC1 subfamily.

Its function is as follows. E2-like enzyme which forms an intermediate with UFM1 via a thioester linkage. This is Ubiquitin-fold modifier-conjugating enzyme 1 from Drosophila ananassae (Fruit fly).